The following is a 1938-amino-acid chain: Myosin-6 (1938 aa).

The region spanning 32 to 81 is the Myosin N-terminal SH3-like domain; the sequence is DIRTECFVPDDKEEYVKAKVVSREGGKVTAETENGKTVTIKEDQVMQQNP. The Myosin motor domain maps to 85–780; the sequence is DKIEDMAMLT…LLGLLEEMRD (696 aa). Position 129 is an N6,N6,N6-trimethyllysine (K129). 178–185 provides a ligand contact to ATP; sequence GESGAGKT. T379 carries the post-translational modification Phosphothreonine. Position 417 is a phosphoserine (S417). Actin-binding stretches follow at residues 657–679 and 759–773; these read LNKLMTNLKTTHPHFVRCIIPNE and KFGHTKVFFKAGLLG. An IQ domain is found at 783–812; it reads LSRIITRIQAQARGQLMRIEFKKIVERRDA. Calmodulin-binding regions lie at residues 790-807 and 816-833; these read IQAQARGQLMRIEFKKIV and IQWNIRAFMGVKNWPWMK. Residues 842 to 1938 adopt a coiled-coil conformation; it reads LKSAETEKEM…IGAKKMHDEE (1097 aa). Phosphoserine is present on residues S1090 and S1139. Residue Y1261 is modified to Phosphotyrosine. S1271 carries the phosphoserine modification. A phosphothreonine mark is found at T1277 and T1284. S1309 is modified (phosphoserine). Position 1310 is a phosphotyrosine (Y1310). At T1311 the chain carries Phosphothreonine. Phosphoserine is present on S1512. Position 1515 is a phosphothreonine (T1515). The tract at residues 1909 to 1938 is disordered; that stretch reads EERADIAESQVNKLRAKSRDIGAKKMHDEE. Over residues 1925 to 1938 the composition is skewed to basic and acidic residues; sequence KSRDIGAKKMHDEE.

The protein belongs to the TRAFAC class myosin-kinesin ATPase superfamily. Myosin family. Muscle myosin is a hexameric protein that consists of 2 heavy chain subunits (MHC), 2 alkali light chain subunits (MLC) and 2 regulatory light chain subunits (MLC-2).

The protein resides in the cytoplasm. It is found in the myofibril. Muscle contraction. This Mus musculus (Mouse) protein is Myosin-6 (Myh6).